The following is a 142-amino-acid chain: Universal stress protein G (142 aa).

It belongs to the universal stress protein A family.

The chain is Universal stress protein G (uspG) from Escherichia coli O157:H7.